The primary structure comprises 303 residues: HTH-type transcriptional regulator YjiE (303 aa).

In terms of domain architecture, HTH lysR-type spans 11–68; it reads IETKWLYDFLTLEKCRNFSQAAVSRNVSQPAFSRRIRALEQAIGVELFNRQVTPLQLS. The H-T-H motif DNA-binding region spans 28–47; sequence FSQAAVSRNVSQPAFSRRIR.

It belongs to the LysR transcriptional regulatory family. In terms of assembly, forms dimers, tetramers and possibly dodecameric complexes; oligomerization may be governed by cellular concentrations. DNA-binding seems to decrease oligomerization.

In terms of biological role, protects cells from HOCl (hypochlorite) stress but not peroxide or diamide stress. Decreases the intracellular load of reactive oxygen species by up-regulating genes involved in methionine and cysteine biosynthesis and down-regulating Fur-regulated genes involved in iron acquisition. Has also been suggested to down-regulate expression of the flagellar regulon, decreasing motility, but this activity was not confirmed in a second study. The polypeptide is HTH-type transcriptional regulator YjiE (yjiE) (Escherichia coli (strain K12)).